The sequence spans 458 residues: Bifunctional protein GlmU (458 aa).

The tract at residues Met1–Arg229 is pyrophosphorylase. UDP-N-acetyl-alpha-D-glucosamine-binding positions include Leu8–Gly11, Lys22, Gln72, and Gly77–Thr78. Asp102 lines the Mg(2+) pocket. UDP-N-acetyl-alpha-D-glucosamine contacts are provided by Gly139, Glu154, Asn169, and Asn227. Asn227 lines the Mg(2+) pocket. The tract at residues Val230 to Asn250 is linker. The interval Gly251 to Gln458 is N-acetyltransferase. The UDP-N-acetyl-alpha-D-glucosamine site is built by Arg332 and Lys350. Catalysis depends on His362, which acts as the Proton acceptor. 2 residues coordinate UDP-N-acetyl-alpha-D-glucosamine: Tyr365 and Asn376. Acetyl-CoA is bound by residues Ala379, Ser404, Ala422, and Arg439.

The protein in the N-terminal section; belongs to the N-acetylglucosamine-1-phosphate uridyltransferase family. This sequence in the C-terminal section; belongs to the transferase hexapeptide repeat family. Homotrimer. Mg(2+) is required as a cofactor.

Its subcellular location is the cytoplasm. The enzyme catalyses alpha-D-glucosamine 1-phosphate + acetyl-CoA = N-acetyl-alpha-D-glucosamine 1-phosphate + CoA + H(+). It carries out the reaction N-acetyl-alpha-D-glucosamine 1-phosphate + UTP + H(+) = UDP-N-acetyl-alpha-D-glucosamine + diphosphate. It functions in the pathway nucleotide-sugar biosynthesis; UDP-N-acetyl-alpha-D-glucosamine biosynthesis; N-acetyl-alpha-D-glucosamine 1-phosphate from alpha-D-glucosamine 6-phosphate (route II): step 2/2. Its pathway is nucleotide-sugar biosynthesis; UDP-N-acetyl-alpha-D-glucosamine biosynthesis; UDP-N-acetyl-alpha-D-glucosamine from N-acetyl-alpha-D-glucosamine 1-phosphate: step 1/1. It participates in bacterial outer membrane biogenesis; LPS lipid A biosynthesis. Its function is as follows. Catalyzes the last two sequential reactions in the de novo biosynthetic pathway for UDP-N-acetylglucosamine (UDP-GlcNAc). The C-terminal domain catalyzes the transfer of acetyl group from acetyl coenzyme A to glucosamine-1-phosphate (GlcN-1-P) to produce N-acetylglucosamine-1-phosphate (GlcNAc-1-P), which is converted into UDP-GlcNAc by the transfer of uridine 5-monophosphate (from uridine 5-triphosphate), a reaction catalyzed by the N-terminal domain. The chain is Bifunctional protein GlmU from Lactococcus lactis subsp. cremoris (strain SK11).